We begin with the raw amino-acid sequence, 144 residues long: Transcription antitermination protein NusB (144 aa).

The protein belongs to the NusB family.

In terms of biological role, involved in transcription antitermination. Required for transcription of ribosomal RNA (rRNA) genes. Binds specifically to the boxA antiterminator sequence of the ribosomal RNA (rrn) operons. This Streptococcus thermophilus (strain CNRZ 1066) protein is Transcription antitermination protein NusB.